The sequence spans 258 residues: Allene oxide cyclase 3, chloroplastic (258 aa).

The N-terminal 56 residues, 1–56 (MASSSAAMSLESISMTTLNNLSRNHQSHRSSLLGFSRSFQNLGISSNGPDFSSRSR), are a transit peptide targeting the chloroplast.

It belongs to the allene oxide cyclase family. In terms of tissue distribution, highly expressed in fully developed leaves.

Its subcellular location is the plastid. The protein resides in the chloroplast. The enzyme catalyses (9Z,13S,15Z)-12,13-epoxyoctadeca-9,11,15-trienoate = (9S,13S,15Z)-12-oxophyto-10,15-dienoate. Involved in the production of 12-oxo-phytodienoic acid (OPDA), a precursor of jasmonic acid. This chain is Allene oxide cyclase 3, chloroplastic (AOC3), found in Arabidopsis thaliana (Mouse-ear cress).